Here is a 116-residue protein sequence, read N- to C-terminus: Protein SPIRAL1-like 1 (116 aa).

A compositionally biased stretch (gly residues) spans 1–12; the sequence is MSRGGSAGGGQS. Residues 1–116 form a disordered region; it reads MSRGGSAGGG…SSLGYLFGGN (116 aa). A compositionally biased stretch (pro residues) spans 27–43; that stretch reads AAKPAPAAAPAPAPAPA. Low complexity predominate over residues 44–60; that stretch reads PAAAVAAPAEKPSPAKA. Polar residues predominate over residues 72–90; that stretch reads GSRSNNNYHRADGQNTGNF. The segment covering 103 to 116 has biased composition (gly residues); it reads PGGGSSLGYLFGGN.

The protein belongs to the SPIRAL1 family.

In terms of biological role, acts in maintaining the cortical microtubules organization essential for anisotropic cell growth. This chain is Protein SPIRAL1-like 1, found in Oryza sativa subsp. japonica (Rice).